We begin with the raw amino-acid sequence, 245 residues long: NAD(P)H-hydrate epimerase (245 aa).

Positions 16 to 224 (AAALDAELMA…HIADKYDLEV (209 aa)) constitute a YjeF N-terminal domain. 68-72 (NNGGD) provides a ligand contact to (6S)-NADPHX. K(+)-binding residues include Asn-69 and Asp-131. Residues 135-141 (GFSFKPP) and Asp-164 each bind (6S)-NADPHX. K(+) is bound at residue Ser-167.

This sequence belongs to the NnrE/AIBP family. It depends on K(+) as a cofactor.

The protein resides in the cytoplasm. It localises to the mitochondrion. The enzyme catalyses (6R)-NADHX = (6S)-NADHX. It catalyses the reaction (6R)-NADPHX = (6S)-NADPHX. Catalyzes the epimerization of the S- and R-forms of NAD(P)HX, a damaged form of NAD(P)H that is a result of enzymatic or heat-dependent hydration. This is a prerequisite for the S-specific NAD(P)H-hydrate dehydratase to allow the repair of both epimers of NAD(P)HX. The sequence is that of NAD(P)H-hydrate epimerase from Yarrowia lipolytica (strain CLIB 122 / E 150) (Yeast).